The following is a 388-amino-acid chain: Succinate--CoA ligase [ADP-forming] subunit beta (388 aa).

One can recognise an ATP-grasp domain in the interval 9–244 (KEILRKFGVA…LDEEDPAEIE (236 aa)). ATP contacts are provided by residues Lys-46, 53–55 (GRG), Glu-99, Ala-102, and Glu-107. Mg(2+)-binding residues include Asn-199 and Asp-213. Substrate contacts are provided by residues Asn-264 and 321-323 (GIM).

It belongs to the succinate/malate CoA ligase beta subunit family. Heterotetramer of two alpha and two beta subunits. Mg(2+) is required as a cofactor.

It catalyses the reaction succinate + ATP + CoA = succinyl-CoA + ADP + phosphate. The catalysed reaction is GTP + succinate + CoA = succinyl-CoA + GDP + phosphate. The protein operates within carbohydrate metabolism; tricarboxylic acid cycle; succinate from succinyl-CoA (ligase route): step 1/1. In terms of biological role, succinyl-CoA synthetase functions in the citric acid cycle (TCA), coupling the hydrolysis of succinyl-CoA to the synthesis of either ATP or GTP and thus represents the only step of substrate-level phosphorylation in the TCA. The beta subunit provides nucleotide specificity of the enzyme and binds the substrate succinate, while the binding sites for coenzyme A and phosphate are found in the alpha subunit. The polypeptide is Succinate--CoA ligase [ADP-forming] subunit beta (Burkholderia vietnamiensis (strain G4 / LMG 22486) (Burkholderia cepacia (strain R1808))).